The sequence spans 75 residues: Signaling peptide TAXIMIN 1 (75 aa).

Positions 1 to 29 (MCDGDCRPLGFLLGLPFAFLSLLLSIIGV) are cleaved as a signal peptide.

As to expression, expressed in shoot apical meristems (SAM); mostly specific to the L1 layer in the center of the meristem but also detected in the L2 layer in organ primordia. Also observed in the vasculature of seedling roots.

The protein localises to the secreted. Counteracted by the antibiotic cefotaxime during responses to light stress. In terms of biological role, signaling peptide involved in the regulation of lateral organs separation, including fruits and leaves. Involved in the perception of and response to light stress via the control of sinapoyl-malate accumulation, a UV-B protecting compound. The polypeptide is Signaling peptide TAXIMIN 1 (Arabidopsis thaliana (Mouse-ear cress)).